Reading from the N-terminus, the 364-residue chain is Protein Wnt-16 (364 aa).

Positions 1–29 (MDRAALLALPSLCALWAAVLSLLPCGTQG) are cleaved as a signal peptide. Intrachain disulfides connect Cys81-Cys92, Cys138-Cys146, and Cys148-Cys167. The N-linked (GlcNAc...) asparagine glycan is linked to Asn142. A glycan (N-linked (GlcNAc...) asparagine) is linked at Asn188. 8 disulfide bridges follow: Cys220–Cys234, Cys222–Cys229, Cys293–Cys324, Cys309–Cys319, Cys323–Cys363, Cys339–Cys354, Cys341–Cys351, and Cys346–Cys347. Ser226 carries O-palmitoleoyl serine; by PORCN lipidation. N-linked (GlcNAc...) asparagine glycosylation occurs at Asn310.

It belongs to the Wnt family. Post-translationally, palmitoleoylation is required for efficient binding to frizzled receptors. Depalmitoleoylation leads to Wnt signaling pathway inhibition.

The protein resides in the secreted. Its subcellular location is the extracellular space. It is found in the extracellular matrix. Ligand for members of the frizzled family of seven transmembrane receptors. Probable developmental protein. May be a signaling molecule which affects the development of discrete regions of tissues. Is likely to signal over only few cell diameters. This chain is Protein Wnt-16 (Wnt16), found in Mus musculus (Mouse).